Here is a 207-residue protein sequence, read N- to C-terminus: Large ribosomal subunit protein uL4 (207 aa).

Residues 48 to 78 are disordered; it reads THKVKTRSEVRGGGRKPWRQKGTGRARQGSI. Residues 60–71 are compositionally biased toward basic residues; sequence GGRKPWRQKGTG.

Belongs to the universal ribosomal protein uL4 family. In terms of assembly, part of the 50S ribosomal subunit.

In terms of biological role, one of the primary rRNA binding proteins, this protein initially binds near the 5'-end of the 23S rRNA. It is important during the early stages of 50S assembly. It makes multiple contacts with different domains of the 23S rRNA in the assembled 50S subunit and ribosome. Its function is as follows. Forms part of the polypeptide exit tunnel. This is Large ribosomal subunit protein uL4 from Bacillus pumilus (strain SAFR-032).